The chain runs to 254 residues: Arginine/ornithine transport ATP-binding protein AotP (254 aa).

Residues 4–249 (LEVQDLHKRY…PQSDRLKQFL (246 aa)) form the ABC transporter domain. 36–43 (GSSGSGKS) provides a ligand contact to ATP.

It belongs to the ABC transporter superfamily.

The protein localises to the cell inner membrane. In terms of biological role, part of the arginine-inducible binding-protein-dependent transport system for arginine and ornithine. Probably responsible for energy coupling to the transport system. In Pseudomonas aeruginosa (strain ATCC 15692 / DSM 22644 / CIP 104116 / JCM 14847 / LMG 12228 / 1C / PRS 101 / PAO1), this protein is Arginine/ornithine transport ATP-binding protein AotP (aotP).